A 1288-amino-acid chain; its full sequence is (E3-independent) E2 ubiquitin-conjugating enzyme UBE2O (1288 aa).

Low complexity-rich tracts occupy residues 1–26 and 34–47; these read MADPAAPAPAQAQAAAAPTPAAAPAA and ATDSASGPSSDSGP. Disordered stretches follow at residues 1–51 and 80–109; these read MADP…EAGS and EDSDSEGDDDGRGSSGCSEAGGAGHEEGRA. Ser45, Ser82, Ser84, and Ser394 each carry phosphoserine. Disordered regions lie at residues 396-529 and 711-743; these read TPDT…KNKV and ESDYDSVEGSSSGASSDEWEDDSDSWETDNGLV. The span at 401–418 shows a compositional bias: basic and acidic residues; it reads CPRDHSMEDPDKKGEARA. Residue Ser436 is modified to Phosphoserine. The segment covering 440-450 has biased composition (acidic residues); the sequence is MQDEGSEELQE. A compositionally biased stretch (basic and acidic residues) spans 462–472; that stretch reads EGGDDGLHSAE. Positions 473–485 are enriched in acidic residues; the sequence is QDADDEAADDTDD. Residues Thr483 and Thr486 each carry the phosphothreonine modification. A compositionally biased stretch (low complexity) spans 486–502; sequence TSSVTSSASSTTSSQSG. Ser510 carries the phosphoserine modification. Over residues 517 to 528 the composition is skewed to basic residues; it reads NLKRKHKRKKNK. Positions 717-726 are enriched in low complexity; that stretch reads VEGSSSGASS. The span at 727–737 shows a compositional bias: acidic residues; the sequence is DEWEDDSDSWE. Positions 809–879 form a coiled coil; sequence RELKEAIKIL…IAEEEKMEAV (71 aa). Residue Ser833 is modified to Phosphoserine. At Thr835 the chain carries Phosphothreonine. Ser836 bears the Phosphoserine mark. The segment covering 872-890 has biased composition (basic and acidic residues); that stretch reads EEEKMEAVPDTERKEEKPE. Residues 872 to 899 form a disordered region; it reads EEEKMEAVPDTERKEEKPEVQSPVKAEW. A Phosphoserine modification is found at Ser893. The UBC core domain occupies 950-1110; sequence KFFSTVRKEM…ALIRVVQSMT (161 aa). Cys1037 functions as the Glycyl thioester intermediate in the catalytic mechanism. The tract at residues 1158–1247 is disordered; it reads GALKDSSSLE…RSFLPEKSGY (90 aa).

The protein belongs to the ubiquitin-conjugating enzyme family. In terms of assembly, interacts with CPNE1 (via VWFA domain) and CPNE4 (via VWFA domain). Interacts with UBR2. In terms of processing, phosphorylated. Phosphorylation affects subcellular location. Post-translationally, ubiquitinated: autoubiquitinates, possibly affecting its subcellular location. In terms of tissue distribution, highly expressed in reticulocytes.

The protein localises to the cytoplasm. The protein resides in the nucleus. The enzyme catalyses S-ubiquitinyl-[E1 ubiquitin-activating enzyme]-L-cysteine + [acceptor protein]-L-lysine = [E1 ubiquitin-activating enzyme]-L-cysteine + N(6)-monoubiquitinyl-[acceptor protein]-L-lysine.. It participates in protein modification; protein ubiquitination. Its activity is regulated as follows. Inhibited by inorganic arsenite such as phenylarsenoxides. E2/E3 hybrid ubiquitin-protein ligase that displays both E2 and E3 ligase activities and mediates monoubiquitination of target proteins. Negatively regulates TRAF6-mediated NF-kappa-B activation independently of its E2 activity. Acts as a positive regulator of BMP7 signaling by mediating monoubiquitination of SMAD6, thereby regulating adipogenesis. Mediates monoubiquitination at different sites of the nuclear localization signal (NLS) of BAP1, leading to cytoplasmic retention of BAP1. Also able to monoubiquitinate the NLS of other chromatin-associated proteins, such as INO80 and CXXC1, affecting their subcellular location. Acts as a regulator of retrograde transport by assisting the TRIM27:MAGEL2 E3 ubiquitin ligase complex to mediate 'Lys-63'-linked ubiquitination of WASHC1, leading to promote endosomal F-actin assembly. The protein is (E3-independent) E2 ubiquitin-conjugating enzyme UBE2O (Ube2o) of Mus musculus (Mouse).